The sequence spans 145 residues: MRALVQRVTSASVRVDGDEVGRITPPAGGHGLLVLVGVTHTDDEAKAALLARKVWTMRILENEQSAADLDAPVLVASQFTLMADTRRGRRPSWSAAAPRPVAEPLVDEFTGALRELGATVETGVFGEHMEISLVNDGPVTLLIDV.

The short motif at 137 to 138 (GP) is the Gly-cisPro motif, important for rejection of L-amino acids element.

It belongs to the DTD family. As to quaternary structure, homodimer.

The protein localises to the cytoplasm. The enzyme catalyses glycyl-tRNA(Ala) + H2O = tRNA(Ala) + glycine + H(+). The catalysed reaction is a D-aminoacyl-tRNA + H2O = a tRNA + a D-alpha-amino acid + H(+). An aminoacyl-tRNA editing enzyme that deacylates mischarged D-aminoacyl-tRNAs. Also deacylates mischarged glycyl-tRNA(Ala), protecting cells against glycine mischarging by AlaRS. Acts via tRNA-based rather than protein-based catalysis; rejects L-amino acids rather than detecting D-amino acids in the active site. By recycling D-aminoacyl-tRNA to D-amino acids and free tRNA molecules, this enzyme counteracts the toxicity associated with the formation of D-aminoacyl-tRNA entities in vivo and helps enforce protein L-homochirality. In Rhodococcus opacus (strain B4), this protein is D-aminoacyl-tRNA deacylase.